The sequence spans 228 residues: L-ribulose-5-phosphate 4-epimerase UlaF (228 aa).

Substrate is bound by residues 26-27 (GN), 43-44 (SG), and 72-73 (SS). Residues aspartate 74, histidine 93, and histidine 95 each coordinate Zn(2+). Aspartate 118 (proton donor/acceptor) is an active-site residue. Residue histidine 167 coordinates Zn(2+). Tyrosine 225 functions as the Proton donor/acceptor in the catalytic mechanism.

It belongs to the aldolase class II family. AraD/FucA subfamily. Zn(2+) is required as a cofactor.

It carries out the reaction L-ribulose 5-phosphate = D-xylulose 5-phosphate. It participates in cofactor degradation; L-ascorbate degradation; D-xylulose 5-phosphate from L-ascorbate: step 4/4. Catalyzes the isomerization of L-ribulose 5-phosphate to D-xylulose 5-phosphate. Is involved in the anaerobic L-ascorbate utilization. In Salmonella paratyphi A (strain ATCC 9150 / SARB42), this protein is L-ribulose-5-phosphate 4-epimerase UlaF.